The chain runs to 725 residues: Consortin (725 aa).

5 disordered regions span residues 1-72 (MDDS…LNNN), 103-124 (GKDKKIPGKRSPRSKKGTAKKI), 296-353 (LLVS…SLSV), 375-397 (TQSSETAGSPSGPDSSEDACEDD), and 485-510 (QQPDLTDSDGKSPQAQADSDGSENVL). Topologically, residues 1–664 (MDDSDTPTYY…LDQDEVGGGS (664 aa)) are cytoplasmic. A compositionally biased stretch (polar residues) spans 63–72 (VSEQDSLNNN). The span at 109–121 (PGKRSPRSKKGTA) shows a compositional bias: basic residues. Residues 300-314 (EDPKEGGATTKESES) are compositionally biased toward basic and acidic residues. Polar residues-rich tracts occupy residues 343–353 (DVQTDSPSLSV) and 375–388 (TQSSETAGSPSGPD). Residues 665–685 (CILLVLLCIATVFLSVGGTAL) traverse the membrane as a helical segment. Over 686–725 (YCTFGDMESPVCTDFADNMDFYYTKLLQGVAELKHWIYLS) the chain is Extracellular.

The protein belongs to the CNST family. Interacts with connexins GJA1/CX43, GJB1/CX32, GJB2/CX26, GJB3/CX31, GJB6/CX30 and GJC1/CX45. Also interacts with GGA1 and GGA2. Does not interact with PANX1.

The protein resides in the cell membrane. Its subcellular location is the golgi apparatus. It is found in the trans-Golgi network membrane. It localises to the cytoplasmic vesicle. The protein localises to the secretory vesicle. Functionally, required for targeting of connexins to the plasma membrane. The sequence is that of Consortin (CNST) from Homo sapiens (Human).